A 215-amino-acid polypeptide reads, in one-letter code: Heart- and neural crest derivatives-expressed protein 1 (215 aa).

Disordered stretches follow at residues 53–109 (APDF…RTES) and 166–198 (LKKA…EKRI). Residues 65 to 89 (AAAAATAYGPDARPGQSPGRLEALG) show a composition bias toward low complexity. Basic residues predominate over residues 92–104 (LGRRKGSGPKKER). Residues 94 to 146 (RRKGSGPKKERRRTESINSAFAELRECIPNVPADTKLSKIKTLRLATSYIAYL) enclose the bHLH domain. The residue at position 107 (T107) is a Phosphothreonine; by PLK4. Position 109 is a phosphoserine; by PLK4 (S109).

As to quaternary structure, efficient DNA binding requires dimerization with another bHLH protein. Forms homodimers and heterodimers with TCF3 gene products E12 and E47, HAND2 and HEY1, HEY2 and HEYL (hairy-related transcription factors). Interacts with MDFIC. Interacts with SOX15; the interaction enhances HAND1-induced differentiation of trophoblast giant cells. Phosphorylation by PLK4 disrupts the interaction with MDFIC and leads to translocation into the nucleoplasm, allowing dimerization and transcription factor activity. As to expression, heart.

Its subcellular location is the nucleus. The protein localises to the nucleoplasm. The protein resides in the nucleolus. Its function is as follows. Transcription factor that plays an essential role in both trophoblast giant cell differentiation and in cardiac morphogenesis. Binds the DNA sequence 5'-NRTCTG-3' (non-canonical E-box). Acts as a transcriptional repressor of SOX15. In the adult, could be required for ongoing expression of cardiac-specific genes. The chain is Heart- and neural crest derivatives-expressed protein 1 (HAND1) from Homo sapiens (Human).